The chain runs to 551 residues: Glucose-6-phosphate isomerase (551 aa).

The Proton donor role is filled by Glu-349. Active-site residues include His-378 and Lys-480.

This sequence belongs to the GPI family.

It is found in the cytoplasm. It catalyses the reaction alpha-D-glucose 6-phosphate = beta-D-fructose 6-phosphate. The protein operates within carbohydrate biosynthesis; gluconeogenesis. Its pathway is carbohydrate degradation; glycolysis; D-glyceraldehyde 3-phosphate and glycerone phosphate from D-glucose: step 2/4. Catalyzes the reversible isomerization of glucose-6-phosphate to fructose-6-phosphate. The protein is Glucose-6-phosphate isomerase of Prochlorococcus marinus (strain MIT 9313).